A 684-amino-acid chain; its full sequence is U4/U6 small nuclear ribonucleoprotein Prp3 (684 aa).

One can recognise a PWI domain in the interval 1 to 87 (MSLSKRELDE…HSKSNSDRNR (87 aa)). Residues 73-107 (GRSSRHSKSNSDRNRKRELKDVFGDDSEVSKESSG) are compositionally biased toward basic and acidic residues. Disordered regions lie at residues 73–109 (GRSSRHSKSNSDRNRKRELKDVFGDDSEVSKESSGVK) and 162–183 (FISPPTPQPKISSSSQSERLPI). Residues 170-183 (PKISSSSQSERLPI) show a composition bias toward polar residues.

In terms of assembly, component of the precatalytic spliceosome (spliceosome B complex). Component of the U4/U6-U5 tri-snRNP complex, a building block of the precatalytic spliceosome (spliceosome B complex). The U4/U6-U5 tri-snRNP complex is composed of the U4, U6 and U5 snRNAs and at least PRPF3, PRPF4, PRPF6, PRPF8, PRPF31, SNRNP200, TXNL4A, SNRNP40, SNRPB, SNRPD1, SNRPD2, SNRPD3, SNRPE, SNRPF, SNRPG, DDX23, CD2BP2, PPIH, SNU13, EFTUD2, SART1 and USP39, plus LSM2, LSM3, LSM4, LSM5, LSM6, LSM7 and LSM8.

Its subcellular location is the nucleus. It is found in the nucleus speckle. Its function is as follows. Plays a role in pre-mRNA splicing as component of the U4/U6-U5 tri-snRNP complex that is involved in spliceosome assembly, and as component of the precatalytic spliceosome (spliceosome B complex). This chain is U4/U6 small nuclear ribonucleoprotein Prp3 (PRPF3), found in Gallus gallus (Chicken).